The primary structure comprises 530 residues: Autoinducer-2 kinase (530 aa).

The protein belongs to the FGGY kinase family.

It is found in the cytoplasm. The catalysed reaction is (S)-4,5-dihydroxypentane-2,3-dione + ATP = (2S)-2-hydroxy-3,4-dioxopentyl phosphate + ADP + H(+). In terms of biological role, catalyzes the phosphorylation of autoinducer-2 (AI-2) to phospho-AI-2, which subsequently inactivates the transcriptional regulator LsrR and leads to the transcription of the lsr operon. Phosphorylates the ring-open form of (S)-4,5-dihydroxypentane-2,3-dione (DPD), which is the precursor to all AI-2 signaling molecules, at the C5 position. The protein is Autoinducer-2 kinase of Escherichia coli O139:H28 (strain E24377A / ETEC).